A 299-amino-acid polypeptide reads, in one-letter code: tRNA dimethylallyltransferase (299 aa).

11 to 18 provides a ligand contact to ATP; it reads GPTAVGKT. 13 to 18 contributes to the substrate binding site; the sequence is TAVGKT. The interaction with substrate tRNA stretch occupies residues 36–39; that stretch reads DSQQ.

It belongs to the IPP transferase family. As to quaternary structure, monomer. Requires Mg(2+) as cofactor.

It carries out the reaction adenosine(37) in tRNA + dimethylallyl diphosphate = N(6)-dimethylallyladenosine(37) in tRNA + diphosphate. Functionally, catalyzes the transfer of a dimethylallyl group onto the adenine at position 37 in tRNAs that read codons beginning with uridine, leading to the formation of N6-(dimethylallyl)adenosine (i(6)A). This Streptococcus pyogenes serotype M1 protein is tRNA dimethylallyltransferase.